The sequence spans 148 residues: Proteasome chaperone 4 (148 aa).

This sequence belongs to the PSMG4 family. As to quaternary structure, component of the 20S proteasome chaperone. Forms a heterodimer with IRC25 that binds to proteasome precursors. Interacts with POP2.

The protein localises to the cytoplasm. In terms of biological role, involved in 20S proteasome assembly, facilitating the alpha-ring formation. Involved in maintenance of telomere length. This is Proteasome chaperone 4 (POC4) from Saccharomyces cerevisiae (strain ATCC 204508 / S288c) (Baker's yeast).